The chain runs to 427 residues: Serine--tRNA ligase (427 aa).

231 to 233 (TAE) lines the L-serine pocket. Residue 262–264 (RSE) participates in ATP binding. An L-serine-binding site is contributed by E285. 349-352 (EISS) serves as a coordination point for ATP. S385 provides a ligand contact to L-serine.

This sequence belongs to the class-II aminoacyl-tRNA synthetase family. Type-1 seryl-tRNA synthetase subfamily. In terms of assembly, homodimer. The tRNA molecule binds across the dimer.

The protein localises to the cytoplasm. It carries out the reaction tRNA(Ser) + L-serine + ATP = L-seryl-tRNA(Ser) + AMP + diphosphate + H(+). The enzyme catalyses tRNA(Sec) + L-serine + ATP = L-seryl-tRNA(Sec) + AMP + diphosphate + H(+). The protein operates within aminoacyl-tRNA biosynthesis; selenocysteinyl-tRNA(Sec) biosynthesis; L-seryl-tRNA(Sec) from L-serine and tRNA(Sec): step 1/1. In terms of biological role, catalyzes the attachment of serine to tRNA(Ser). Is also able to aminoacylate tRNA(Sec) with serine, to form the misacylated tRNA L-seryl-tRNA(Sec), which will be further converted into selenocysteinyl-tRNA(Sec). The chain is Serine--tRNA ligase from Allorhizobium ampelinum (strain ATCC BAA-846 / DSM 112012 / S4) (Agrobacterium vitis (strain S4)).